Here is a 275-residue protein sequence, read N- to C-terminus: Calcium uniporter protein, mitochondrial (275 aa).

The transit peptide at 1-28 (MNSFVIRNGFGLVRTFNTRLFTTSTQNL) directs the protein to the mitochondrion. Topologically, residues 29–165 (EGELKTILGQ…DRKAHRRATA (137 aa)) are mitochondrial matrix. Residues 125-157 (VGLNKLIESKKSEINSLRQKIQPLEEKKQVIDR) adopt a coiled-coil conformation. The helical transmembrane segment at 166-186 (IIWTGLGYCFAQAAILARLTW) threads the bilayer. Over 187–192 (WDLSWD) the chain is Mitochondrial intermembrane. Positions 191-199 (WDIIEPVSY) match the Selectivity filter motif. Residues 193 to 213 (IIEPVSYFLTFGSVLIGYTYF) form a helical membrane-spanning segment. E195 serves as a coordination point for Ca(2+). Over 214 to 275 (TMTKTEFTYE…ELATKYDHTH (62 aa)) the chain is Mitochondrial matrix. A coiled-coil region spans residues 244–270 (PKEDYENLVQAIDKKEKELKELELATK).

Belongs to the MCU (TC 1.A.77) family. In terms of assembly, homooligomer.

Its subcellular location is the mitochondrion inner membrane. The catalysed reaction is Ca(2+)(in) = Ca(2+)(out). Its activity is regulated as follows. Inhibited by ruthenium red or its derivative Ru360. Its function is as follows. Mitochondrial inner membrane calcium uniporter that mediates calcium uptake into mitochondria. Constitutes a pore-forming and calcium-conducting subunit. Mitochondrial calcium homeostasis plays key roles in cellular physiology and regulates cell bioenergetics, cytoplasmic calcium signals and activation of cell death pathways. Sufficient to operate as a pore-forming channel without the need of calcium-sensor or auxiliary subunit. In Dictyostelium discoideum (Social amoeba), this protein is Calcium uniporter protein, mitochondrial.